A 73-amino-acid chain; its full sequence is Crustacean hyperglycemic hormone (73 aa).

Cystine bridges form between cysteine 7–cysteine 43, cysteine 23–cysteine 39, and cysteine 26–cysteine 52. Valine 73 is subject to Valine amide.

The protein belongs to the arthropod CHH/MIH/GIH/VIH hormone family. In terms of tissue distribution, produced by the medulla terminalis X-organ in the eyestalks and transported to the sinus gland where they are stored and released.

The protein localises to the secreted. Its function is as follows. Hormone found in the sinus gland of isopods and decapods which controls the blood sugar level. Has a secretagogue action over the amylase released from the midgut gland. May act as a stress hormone and may be involved in the control of molting and reproduction. This Jasus lalandii (Cape rock lobster) protein is Crustacean hyperglycemic hormone.